A 319-amino-acid chain; its full sequence is Aspartate carbamoyltransferase catalytic subunit (319 aa).

Arginine 65 and threonine 66 together coordinate carbamoyl phosphate. Lysine 93 is an L-aspartate binding site. Arginine 115, histidine 149, and glutamine 152 together coordinate carbamoyl phosphate. L-aspartate is bound by residues arginine 182 and arginine 237. Carbamoyl phosphate contacts are provided by glycine 278 and proline 279.

The protein belongs to the aspartate/ornithine carbamoyltransferase superfamily. ATCase family. In terms of assembly, heterododecamer (2C3:3R2) of six catalytic PyrB chains organized as two trimers (C3), and six regulatory PyrI chains organized as three dimers (R2).

The enzyme catalyses carbamoyl phosphate + L-aspartate = N-carbamoyl-L-aspartate + phosphate + H(+). It participates in pyrimidine metabolism; UMP biosynthesis via de novo pathway; (S)-dihydroorotate from bicarbonate: step 2/3. Its function is as follows. Catalyzes the condensation of carbamoyl phosphate and aspartate to form carbamoyl aspartate and inorganic phosphate, the committed step in the de novo pyrimidine nucleotide biosynthesis pathway. The sequence is that of Aspartate carbamoyltransferase catalytic subunit from Dechloromonas aromatica (strain RCB).